Consider the following 264-residue polypeptide: NAD-capped RNA hydrolase NudC (264 aa).

Arg-70 is a substrate binding site. Residues Cys-99 and Cys-102 each coordinate Zn(2+). Residue Glu-112 coordinates substrate. The Zn(2+) site is built by Cys-117 and Cys-122. Tyr-127 contacts substrate. The region spanning 128–252 is the Nudix hydrolase domain; the sequence is PVICPCIIVA…TIALKLIEHT (125 aa). 3 residues coordinate a divalent metal cation: Ala-161, Glu-177, and Glu-181. The short motif at 162-183 is the Nudix box element; that stretch reads GFVEVGETFEQAVHREVLEETG. Position 195 to 202 (195 to 202) interacts with substrate; the sequence is QPWAFPNS. Position 222 (Glu-222) interacts with a divalent metal cation. Ala-245 provides a ligand contact to substrate.

The protein belongs to the Nudix hydrolase family. NudC subfamily. Homodimer. The cofactor is Mg(2+). Requires Mn(2+) as cofactor. It depends on Zn(2+) as a cofactor.

It carries out the reaction a 5'-end NAD(+)-phospho-ribonucleoside in mRNA + H2O = a 5'-end phospho-adenosine-phospho-ribonucleoside in mRNA + beta-nicotinamide D-ribonucleotide + 2 H(+). It catalyses the reaction NAD(+) + H2O = beta-nicotinamide D-ribonucleotide + AMP + 2 H(+). The enzyme catalyses NADH + H2O = reduced beta-nicotinamide D-ribonucleotide + AMP + 2 H(+). MRNA decapping enzyme that specifically removes the nicotinamide adenine dinucleotide (NAD) cap from a subset of mRNAs by hydrolyzing the diphosphate linkage to produce nicotinamide mononucleotide (NMN) and 5' monophosphate mRNA. The NAD-cap is present at the 5'-end of some mRNAs and stabilizes RNA against 5'-processing. Has preference for mRNAs with a 5'-end purine. Catalyzes the hydrolysis of a broad range of dinucleotide pyrophosphates. The sequence is that of NAD-capped RNA hydrolase NudC from Pasteurella multocida (strain Pm70).